We begin with the raw amino-acid sequence, 218 residues long: Glutathione S-transferase Mu 1 (218 aa).

One can recognise a GST N-terminal domain in the interval P2–G88. Y7–W8 contacts glutathione. A Phosphothreonine modification is found at T34. Residues R43–W46, K50, and N59–L60 each bind glutathione. S67 carries the post-translational modification Phosphoserine. Glutathione is bound at residue Q72–S73. One can recognise a GST C-terminal domain in the interval T90 to I208. A substrate-binding site is contributed by Y116. S210 is subject to Phosphoserine.

In terms of assembly, homodimer.

The protein localises to the cytoplasm. The catalysed reaction is RX + glutathione = an S-substituted glutathione + a halide anion + H(+). It carries out the reaction prostaglandin A2 + glutathione = prostaglandin A2-S-(R)-glutathione. The enzyme catalyses prostaglandin J2 + glutathione = prostaglandin J2-S-(R)-glutathione. It catalyses the reaction prostaglandin J2 + glutathione = prostaglandin J2-S-(S)-glutathione. The catalysed reaction is prostaglandin A2 + glutathione = prostaglandin A2-S-(S)-glutathione. It carries out the reaction 11(S)-hydroxy-14(S),15(S)-epoxy-(5Z,8Z,12E)-eicosatrienoate + glutathione = (11S,15S)-dihydroxy-14(R)-S-glutathionyl-(5Z,8Z,12E)-eicosatrienoate. Functionally, conjugation of reduced glutathione to a wide number of exogenous and endogenous hydrophobic electrophiles. Involved in the formation of glutathione conjugates of both prostaglandin A2 (PGA2) and prostaglandin J2 (PGJ2). Participates in the formation of novel hepoxilin regioisomers. The polypeptide is Glutathione S-transferase Mu 1 (Mus musculus (Mouse)).